The following is a 220-amino-acid chain: MKKEKAVVVFSGGQDSTTCLFWAIEQFAEVEAVTFNYNQRHKLEIDCAAEIAKELGIKHTVLDMSLLNQLAPNALTRTDMEITHEEGELPSTFVDGRNLLFLSFAAVLAKQVGARHIVTGVCETDFSGYPDCRDVFVKSLNVTLNLSMDYPFVIHTPLMWIDKAETWKLSDELGAFEFVREKTLTCYNGIIGDGCGECPACQLRKAGLDTYLQEREGASN.

10–20 (FSGGQDSTTCL) contributes to the ATP binding site. Zn(2+) is bound by residues Cys186, Cys195, Cys198, and Cys201.

It belongs to the QueC family. Homodimer. It depends on Zn(2+) as a cofactor.

The enzyme catalyses 7-carboxy-7-deazaguanine + NH4(+) + ATP = 7-cyano-7-deazaguanine + ADP + phosphate + H2O + H(+). The protein operates within purine metabolism; 7-cyano-7-deazaguanine biosynthesis. Functionally, catalyzes the ATP-dependent conversion of 7-carboxy-7-deazaguanine (CDG) to 7-cyano-7-deazaguanine (preQ(0)). This Bacillus thuringiensis (strain Al Hakam) protein is 7-cyano-7-deazaguanine synthase.